Here is a 411-residue protein sequence, read N- to C-terminus: uncharacterized protein (411 aa).

It in the C-terminal section; belongs to the PAPS reductase family.

This is an uncharacterized protein from Methanocaldococcus jannaschii (strain ATCC 43067 / DSM 2661 / JAL-1 / JCM 10045 / NBRC 100440) (Methanococcus jannaschii).